The primary structure comprises 199 residues: MQTIVLEAERRMPGKKSDLKQLRANGNVPATLYHKGEPSISLSVKEQSLRKVIYTTESHIINLRFTDGTEKPSVMKDYQFNPLTDSITHADFQLLKSDEYVEVEVPILFTGNPVGVVKGGMVQATLHKLEIRCLPSDMPEHITVDISSMDMGESLHVGELSSKIQEKIEFTVLTDSHAPVISVLAPRVVADAAPVAPEA.

The protein belongs to the bacterial ribosomal protein bL25 family. CTC subfamily. Part of the 50S ribosomal subunit; part of the 5S rRNA/L5/L18/L25 subcomplex. Contacts the 5S rRNA. Binds to the 5S rRNA independently of L5 and L18.

Functionally, this is one of the proteins that binds to the 5S RNA in the ribosome where it forms part of the central protuberance. This is Large ribosomal subunit protein bL25 from Chloroherpeton thalassium (strain ATCC 35110 / GB-78).